The chain runs to 288 residues: Aquaporin PIP2-4 (288 aa).

Residues 1 to 24 (MAKDIEASGPEAGEFSAKDYTDPP) are disordered. A run of 2 helical transmembrane segments spans residues 42–62 (AVIAEFIATLLFLYITVATVI) and 79–99 (CGGVGILGIAWAFGGMIFILV). The NPA 1 motif lies at 111–113 (NPA). Helical transmembrane passes span 130-150 (LLYIIAQCLGAICGVGLVKGF), 172-192 (GTGLAAEIIGTFVLVYTVFSA), and 206-226 (VLAPLPIGFAVFMVHLATIPI). An NPA 2 motif is present at residues 232 to 234 (NPA). A helical membrane pass occupies residues 254–274 (IFWVGPLIGAAIAAAYHQYVL).

This sequence belongs to the MIP/aquaporin (TC 1.A.8) family. PIP (TC 1.A.8.11) subfamily. In terms of assembly, homomers. May interact with PIP1-2 to form heteromers. In terms of tissue distribution, expressed in the root growing zone at 5-6 mm from the root tip.

The protein resides in the cell membrane. Its function is as follows. Water channel required to facilitate the transport of water across cell membrane. Active as homomers. Increased activity when heteromerization with PIP1-2. In Zea mays (Maize), this protein is Aquaporin PIP2-4 (PIP2-4).